A 290-amino-acid chain; its full sequence is ATP synthase gamma chain (290 aa).

It belongs to the ATPase gamma chain family. F-type ATPases have 2 components, CF(1) - the catalytic core - and CF(0) - the membrane proton channel. CF(1) has five subunits: alpha(3), beta(3), gamma(1), delta(1), epsilon(1). CF(0) has three main subunits: a, b and c.

It localises to the cell inner membrane. Its function is as follows. Produces ATP from ADP in the presence of a proton gradient across the membrane. The gamma chain is believed to be important in regulating ATPase activity and the flow of protons through the CF(0) complex. The polypeptide is ATP synthase gamma chain (Amoebophilus asiaticus (strain 5a2)).